A 261-amino-acid chain; its full sequence is 5'-nucleotidase SurE (261 aa).

Residues D8, D9, S43, and N96 each contribute to the a divalent metal cation site.

It belongs to the SurE nucleotidase family. A divalent metal cation is required as a cofactor.

It is found in the cytoplasm. It catalyses the reaction a ribonucleoside 5'-phosphate + H2O = a ribonucleoside + phosphate. Functionally, nucleotidase that shows phosphatase activity on nucleoside 5'-monophosphates. This is 5'-nucleotidase SurE from Cereibacter sphaeroides (strain ATCC 17025 / ATH 2.4.3) (Rhodobacter sphaeroides).